A 439-amino-acid polypeptide reads, in one-letter code: L-tryptophan decarboxylase (439 aa).

It belongs to the phosphatidylserine decarboxylase family.

It carries out the reaction L-tryptophan + H(+) = tryptamine + CO2. Its pathway is secondary metabolite biosynthesis. In terms of biological role, L-tryptophan decarboxylase; part of the gene cluster that mediates the biosynthesis of psilocybin, a psychotropic tryptamine-derived natural product. The first step in the pathway is the decarboxylation of L-tryptophan to tryptamine by the decarboxylase psiD. 4-hydroxy-L-tryptophan is accepted as substrate by psiD as well. The cytochrome P450 monooxygenase psiH then converts tryptamine to 4-hydroxytryptamine. The kinase psiK catalyzes the 4-O-phosphorylation step by converting 4-hydroxytryptamine into norbaeocystin. The methyltransferase psiM then catalyzes iterative methyl transfer to the amino group of norbaeocystin to yield psilocybin via a monomethylated intermediate, baeocystin. 4-hydroxy-6-methyl-l-tryptophancan also be converted the decarboxylase PsiD, kinase PsiK, and methyltransferase PsiM into respectively 6-methyl-norbaeocystin, 6-methylbaeocystin, and 6-methylpsilocybin. The polypeptide is L-tryptophan decarboxylase (Psilocybe cubensis (Psychedelic mushroom)).